The chain runs to 490 residues: Histone-lysine N-methyltransferase SMYD1 (490 aa).

Residues 7-253 (ENVEVFTAEG…EGEELTVSYI (247 aa)) enclose the SET domain. 17–19 (KGR) contributes to the S-adenosyl-L-methionine binding site. 8 residues coordinate Zn(2+): cysteine 52, cysteine 55, cysteine 65, cysteine 68, cysteine 74, cysteine 78, histidine 86, and cysteine 90. An MYND-type zinc finger spans residues 52–90 (CHTCFKRQEKLHRCGQCKFAHYCDRTCQKDAWLNHKNEC). S-adenosyl-L-methionine is bound by residues histidine 135 and 205–206 (NH). Zn(2+) is bound at residue cysteine 208. An S-adenosyl-L-methionine-binding site is contributed by 270–272 (YYF). The Zn(2+) site is built by cysteine 274, cysteine 276, and cysteine 279.

This sequence belongs to the class V-like SAM-binding methyltransferase superfamily. In terms of assembly, interacts with HDAC1, HDAC2 and HDAC3. Interacts (via MYND-type zinc finger) with NACA isoform skNAC. As to expression, expression seems mostly restricted to heart and skeletal muscle.

Its subcellular location is the cytoplasm. The protein localises to the nucleus. The enzyme catalyses L-lysyl(4)-[histone H3] + 3 S-adenosyl-L-methionine = N(6),N(6),N(6)-trimethyl-L-lysyl(4)-[histone H3] + 3 S-adenosyl-L-homocysteine + 3 H(+). In terms of biological role, methylates histone H3 at 'Lys-4' (H3K4me), seems able to perform both mono-, di-, and trimethylation. Acts as a transcriptional repressor. Essential for cardiomyocyte differentiation and cardiac morphogenesis. The protein is Histone-lysine N-methyltransferase SMYD1 (SMYD1) of Homo sapiens (Human).